Reading from the N-terminus, the 426-residue chain is 3-phosphoshikimate 1-carboxyvinyltransferase (426 aa).

Positions 22, 23, and 27 each coordinate 3-phosphoshikimate. Lys-22 contacts phosphoenolpyruvate. 2 residues coordinate phosphoenolpyruvate: Gly-96 and Arg-124. 3-phosphoshikimate contacts are provided by Ser-170, Ser-171, Gln-172, Ser-198, Asp-314, Asn-337, and Lys-341. Gln-172 is a phosphoenolpyruvate binding site. Catalysis depends on Asp-314, which acts as the Proton acceptor. Phosphoenolpyruvate is bound by residues Arg-345, Arg-387, and Lys-412.

The protein belongs to the EPSP synthase family. In terms of assembly, monomer.

It is found in the cytoplasm. It catalyses the reaction 3-phosphoshikimate + phosphoenolpyruvate = 5-O-(1-carboxyvinyl)-3-phosphoshikimate + phosphate. It functions in the pathway metabolic intermediate biosynthesis; chorismate biosynthesis; chorismate from D-erythrose 4-phosphate and phosphoenolpyruvate: step 6/7. In terms of biological role, catalyzes the transfer of the enolpyruvyl moiety of phosphoenolpyruvate (PEP) to the 5-hydroxyl of shikimate-3-phosphate (S3P) to produce enolpyruvyl shikimate-3-phosphate and inorganic phosphate. This is 3-phosphoshikimate 1-carboxyvinyltransferase from Vibrio campbellii (strain ATCC BAA-1116).